The following is a 205-amino-acid chain: Large ribosomal subunit protein uL18 (205 aa).

It belongs to the universal ribosomal protein uL18 family. In terms of assembly, part of the 50S ribosomal subunit. Contacts the 5S and 23S rRNAs.

In terms of biological role, this is one of the proteins that bind and probably mediate the attachment of the 5S RNA into the large ribosomal subunit, where it forms part of the central protuberance. The protein is Large ribosomal subunit protein uL18 of Pyrobaculum islandicum (strain DSM 4184 / JCM 9189 / GEO3).